Here is an 896-residue protein sequence, read N- to C-terminus: Androgen receptor (896 aa).

A modulating region spans residues Met-1–Lys-534. Positions Met-1–Ala-563 are interaction with ZNF318. Disordered regions lie at residues Gln-35 to Leu-152 and Leu-178 to Gly-218. Low complexity predominate over residues Leu-54–Glu-78. Ser-65 is subject to Phosphoserine; by CDK9. Ser-81 is modified (phosphoserine). Over residues Leu-178 to Gln-189 the composition is skewed to low complexity. A compositionally biased stretch (polar residues) spans Glu-190 to Gly-199. Tyr-215 bears the Phosphotyrosine; by CSK mark. At Ser-248 the chain carries Phosphoserine. Phosphotyrosine; by CSK and TNK2 is present on Tyr-259. Tyr-299, Tyr-338, Tyr-349, and Tyr-354 each carry phosphotyrosine; by CSK. Tyr-355 carries the post-translational modification Phosphotyrosine; by CSK and TNK2. A Glycyl lysine isopeptide (Lys-Gly) (interchain with G-Cter in SUMO) cross-link involves residue Lys-378. Tyr-385 carries the post-translational modification Phosphotyrosine; by CSK. A Glycyl lysine isopeptide (Lys-Gly) (interchain with G-Cter in SUMO) cross-link involves residue Lys-497. Residues Tyr-511 and Tyr-528 each carry the phosphotyrosine; by CSK modification. Residues Tyr-528–Thr-895 form an interaction with LPXN region. The nuclear receptor DNA-binding region spans Thr-535–Leu-608. 2 NR C4-type zinc fingers span residues Cys-536–Cys-556 and Cys-572–Cys-596. Positions Tyr-548–Val-638 are interaction with HIPK3. Positions Gln-568–Thr-895 are interaction with CCAR1. Residues Met-601 to Thr-895 are interaction with KAT7. Phosphoserine; by STK4/MST1 is present on Ser-627. The 232-residue stretch at Glu-645–Ile-876 folds into the NR LBD domain. Residues Asn-682 and Arg-729 each contribute to the 17beta-hydroxy-5alpha-androstan-3-one site. Glycyl lysine isopeptide (Lys-Gly) (interchain with G-Cter in ubiquitin) cross-links involve residues Lys-822 and Lys-824. Thr-854 contacts 17beta-hydroxy-5alpha-androstan-3-one. Tyr-892 is modified (phosphotyrosine; by CSK).

The protein belongs to the nuclear hormone receptor family. NR3 subfamily. In terms of assembly, binds DNA as a homodimer. Part of a ternary complex containing AR, EFCAB6/DJBP and PARK7. Interacts with HIPK3 and NR0B2 in the presence of androgen. The ligand binding domain interacts with KAT7/HBO1 in the presence of dihydrotestosterone. Interacts with EFCAB6/DJBP, PQBP1, RANBP9, RBAK, SPDEF, SRA1, TGFB1I1 and RREB1. Interacts with ZMIZ1/ZIMP10 and ZMIZ2/ZMIP7 which both enhance its transactivation activity. Interacts with SLC30A9 and RAD54L2/ARIP4. Interacts with MACROD1 (via macro domain). Interacts via the ligand-binding domain with LXXLL and FXXLF motifs from NCOA1, NCOA2, NCOA3 and MAGEA11. Interacts (via nuclear receptor DNA binding domain and nuclear receptor ligand binding domain) with NCOA4. The AR N-terminal poly-Gln region binds Ran resulting in enhancement of AR-mediated transactivation. Ran-binding decreases as the poly-Gln length increases. Interacts with HIP1 (via coiled coil domain). Interacts (via ligand-binding domain) with TRIM68. Interacts with TNK2. Interacts with USP26. Interacts with RNF6. Interacts (regulated by RNF6 probably through polyubiquitination) with RNF14; regulates AR transcriptional activity. Interacts with PRMT2 and TRIM24. Interacts with RACK1. Interacts with RANBP10; this interaction enhances dihydrotestosterone-induced AR transcriptional activity. Interacts with PRPF6 in a hormone-independent way; this interaction enhances dihydrotestosterone-induced AR transcriptional activity. Interacts with STK4/MST1. Interacts with ZIPK/DAPK3. Interacts with LPXN. Interacts with MAK. Part of a complex containing AR, MAK and NCOA3. Interacts with CRY1. Interacts with CCAR1 and GATA2. Interacts with ZNF318. Interacts with BUD31. Interacts with ARID4A. Interacts with ARID4B. Interacts (via NR LBD domain) with ZBTB7A; the interaction is direct and androgen-dependent. Interacts with NCOR1. Interacts with NCOR2. Interacts with CRY2 in a ligand-dependent manner. In terms of processing, phosphorylated in prostate cancer cells in response to several growth factors including EGF. Phosphorylation is induced by c-Src kinase (CSK). Tyr-511 is one of the major phosphorylation sites and an increase in phosphorylation and Src kinase activity is associated with prostate cancer progression. Phosphorylation by TNK2 enhances the DNA-binding and transcriptional activity. Phosphorylation at Ser-65 by CDK9 regulates AR promoter selectivity and cell growth. Sumoylated on Lys-378 (major) and Lys-497. Ubiquitinated. Deubiquitinated by USP26. 'Lys-6' and 'Lys-27'-linked polyubiquitination by RNF6 modulates AR transcriptional activity and specificity. Post-translationally, palmitoylated by ZDHHC7 and ZDHHC21. Palmitoylation is required for plasma membrane targeting and for rapid intracellular signaling via ERK and AKT kinases and cAMP generation.

It is found in the nucleus. The protein resides in the cytoplasm. Functionally, steroid hormone receptors are ligand-activated transcription factors that regulate eukaryotic gene expression and affect cellular proliferation and differentiation in target tissues. Transcription factor activity is modulated by bound coactivator and corepressor proteins like ZBTB7A that recruits NCOR1 and NCOR2 to the androgen response elements/ARE on target genes, negatively regulating androgen receptor signaling and androgen-induced cell proliferation. Transcription activation is also down-regulated by NR0B2. Activated, but not phosphorylated, by HIPK3 and ZIPK/DAPK3. This chain is Androgen receptor (AR), found in Sus scrofa (Pig).